Reading from the N-terminus, the 79-residue chain is MAVKLRLTRMGNKKRAFYRIVAVNSETRRDGRPLEYIGFYNPMVDPAEVKIDAEKVQKWLALGAEPTDTVRNLIKKQQA.

Belongs to the bacterial ribosomal protein bS16 family.

In Nitratidesulfovibrio vulgaris (strain ATCC 29579 / DSM 644 / CCUG 34227 / NCIMB 8303 / VKM B-1760 / Hildenborough) (Desulfovibrio vulgaris), this protein is Small ribosomal subunit protein bS16.